A 291-amino-acid chain; its full sequence is Pirin-like protein (291 aa).

It belongs to the pirin family.

The protein localises to the nucleus. This chain is Pirin-like protein, found in Solanum lycopersicum (Tomato).